Reading from the N-terminus, the 209-residue chain is MALLAEHLLKPLPADRQIETGPFLEAVAHLPPFFDCLGSPVFTPIKADISGNITKIKAVYDTDPAKFKTLQNILEVEKGMYGAEWPKVGATLALLWLKRGLRFIQVFLQSICDGERDENHPNLIRVNANKAYEMALKKYHGWLVQKIFKAALYAAPYKSDFLKALSKGQNVTEEECLEKIRLFLVNYTATIDAIYEMYTKMNAELDYTV.

A2 is modified (N-acetylalanine). Tandem repeats lie at residues 45–55 (IKADISGNITK) and 56–66 (IKAVYDTDPAK). The interval 45 to 66 (IKADISGNITKIKAVYDTDPAK) is 2 X 12 AA approximate tandem repeats. 48 to 55 (DISGNITK) is a binding site for beta-D-galactosyl-(1-&gt;4)-beta-D-glucosyl-(1&lt;-&gt;1)-N-[(9Z)-octadecenoyl]-sphing-4-enine. The beta-D-galactosyl-(1-&gt;4)-beta-D-glucosyl-(1&lt;-&gt;1)-N-[(9Z)-octadecenoyl]-sphing-4-enine site is built by H140 and Y207.

It belongs to the GLTP family. As to quaternary structure, monomer.

It is found in the cytoplasm. Functionally, accelerates the intermembrane transfer of various glycolipids. Catalyzes the transfer of various glycosphingolipids between membranes but does not catalyze the transfer of phospholipids. May be involved in the intracellular translocation of glucosylceramides. The protein is Glycolipid transfer protein (GLTP) of Rattus norvegicus (Rat).